The sequence spans 109 residues: Tetracenomycin F2 cyclase (109 aa).

As to quaternary structure, homodimer.

The enzyme catalyses tetracenomycin F2 + H(+) = tetracenomycin F1 + H2O. The protein operates within antibiotic biosynthesis; tetracenomycin C biosynthesis. Functionally, catalyzing the conversion of tetracenomycin F2 to tetracenomycin F1. This is Tetracenomycin F2 cyclase (tcmI) from Streptomyces glaucescens.